A 169-amino-acid polypeptide reads, in one-letter code: N-alpha-acetyltransferase 50 (169 aa).

One can recognise an N-acetyltransferase domain in the interval 5 to 154 (IELGDVTPHN…DAHVLQKNLK (150 aa)). Position 30 (Y30) interacts with substrate. The active site involves Y72. Substrate is bound at residue M74. 76–89 (LGCLAPYRRLGIGT) is an acetyl-CoA binding site. 78-89 (CLAPYRRLGIGT) lines the CoA pocket. The active site involves H111. 116–125 (NESAIDFYRK) provides a ligand contact to CoA. A substrate region spans residues 137-140 (YYKR).

It belongs to the acetyltransferase family. GNAT subfamily.

Its subcellular location is the cytoplasm. It is found in the nucleus. It catalyses the reaction N-terminal L-methionyl-L-alanyl-[protein] + acetyl-CoA = N-terminal N(alpha)-acetyl-L-methionyl-L-alanyl-[protein] + CoA + H(+). The catalysed reaction is N-terminal L-methionyl-L-seryl-[protein] + acetyl-CoA = N-terminal N(alpha)-acetyl-L-methionyl-L-seryl-[protein] + CoA + H(+). It carries out the reaction N-terminal L-methionyl-L-valyl-[protein] + acetyl-CoA = N-terminal N(alpha)-acetyl-L-methionyl-L-valyl-[protein] + CoA + H(+). The enzyme catalyses N-terminal L-methionyl-L-threonyl-[protein] + acetyl-CoA = N-terminal N(alpha)-acetyl-L-methionyl-L-threonyl-[protein] + CoA + H(+). It catalyses the reaction N-terminal L-methionyl-L-lysyl-[protein] + acetyl-CoA = N-terminal N(alpha)-acetyl-L-methionyl-L-lysyl-[protein] + CoA + H(+). The catalysed reaction is N-terminal L-methionyl-L-leucyl-[protein] + acetyl-CoA = N-terminal N(alpha)-acetyl-L-methionyl-L-leucyl-[protein] + CoA + H(+). It carries out the reaction N-terminal L-methionyl-L-phenylalanyl-[protein] + acetyl-CoA = N-terminal N(alpha)-acetyl-L-methionyl-L-phenylalanyl-[protein] + CoA + H(+). The enzyme catalyses N-terminal L-methionyl-L-tyrosyl-[protein] + acetyl-CoA = N-terminal N(alpha)-acetyl-L-methionyl-L-tyrosyl-[protein] + CoA + H(+). Functionally, N-alpha-acetyltransferase that acetylates the N-terminus of proteins that retain their initiating methionine. Has a broad substrate specificity: able to acetylate the initiator methionine of most peptides, except for those with a proline in second position. Also displays N-epsilon-acetyltransferase activity by mediating acetylation of the side chain of specific lysines on proteins. The relevance of N-epsilon-acetyltransferase activity is however unclear. Required for sister chromatid cohesion during mitosis by promoting binding of CDCA5/sororin to cohesin. The protein is N-alpha-acetyltransferase 50 (naa50) of Xenopus tropicalis (Western clawed frog).